A 502-amino-acid chain; its full sequence is UPF0371 protein CLM_0396 (502 aa).

Belongs to the UPF0371 family.

In Clostridium botulinum (strain Kyoto / Type A2), this protein is UPF0371 protein CLM_0396.